Here is a 101-residue protein sequence, read N- to C-terminus: UPF0213 protein VC0395_0675/VC395_A0575 (101 aa).

A GIY-YIG domain is found at 9 to 85; sequence SPWFVYLVRC…KALSKSQKEA (77 aa).

It belongs to the UPF0213 family.

This Vibrio cholerae serotype O1 (strain ATCC 39541 / Classical Ogawa 395 / O395) protein is UPF0213 protein VC0395_0675/VC395_A0575.